The chain runs to 445 residues: Argininosuccinate synthase (445 aa).

ATP contacts are provided by residues 17 to 25 (AFSGGLDTS) and Ala43. Residue Tyr99 coordinates L-citrulline. Gly129 and Thr131 together coordinate ATP. Positions 131, 135, and 136 each coordinate L-aspartate. Asn135 is a binding site for L-citrulline. Asp136 lines the ATP pocket. Positions 139 and 192 each coordinate L-citrulline. Asp194 serves as a coordination point for ATP. Thr201, Glu203, and Glu280 together coordinate L-citrulline.

The protein belongs to the argininosuccinate synthase family. Type 2 subfamily. Homotetramer.

The protein resides in the cytoplasm. The enzyme catalyses L-citrulline + L-aspartate + ATP = 2-(N(omega)-L-arginino)succinate + AMP + diphosphate + H(+). It functions in the pathway amino-acid biosynthesis; L-arginine biosynthesis; L-arginine from L-ornithine and carbamoyl phosphate: step 2/3. The protein is Argininosuccinate synthase of Ralstonia pickettii (strain 12J).